The primary structure comprises 186 residues: Transposons Tn1721 resolvase (186 aa).

The 134-residue stretch at 4–137 (HRIGYVRVSS…EGIALAKQRG (134 aa)) folds into the Resolvase/invertase-type recombinase catalytic domain. Serine 12 (O-(5'-phospho-DNA)-serine intermediate) is an active-site residue. The H-T-H motif DNA-binding region spans 164–183 (KAQLAREFNISRETLYQYLR).

The protein belongs to the site-specific recombinase resolvase family.

In terms of biological role, resolvase catalyzes the resolution (a site-specific recombination) of the cointegrated replicon to yield the final transposition products. This chain is Transposons Tn1721 resolvase (tnpR), found in Escherichia coli.